The primary structure comprises 121 residues: Large ribosomal subunit protein bL21c (121 aa).

This sequence belongs to the bacterial ribosomal protein bL21 family. Part of the 50S ribosomal subunit.

It localises to the plastid. The protein localises to the chloroplast. In terms of biological role, this protein binds to 23S rRNA. In Chaetosphaeridium globosum (Charophycean green alga), this protein is Large ribosomal subunit protein bL21c.